We begin with the raw amino-acid sequence, 251 residues long: Putative imidazole glycerol phosphate synthase subunit hisF2 (251 aa).

Asp130 is a catalytic residue.

The protein belongs to the HisA/HisF family. As to quaternary structure, heterodimer of HisH and HisF.

Its subcellular location is the cytoplasm. It carries out the reaction 5-[(5-phospho-1-deoxy-D-ribulos-1-ylimino)methylamino]-1-(5-phospho-beta-D-ribosyl)imidazole-4-carboxamide + L-glutamine = D-erythro-1-(imidazol-4-yl)glycerol 3-phosphate + 5-amino-1-(5-phospho-beta-D-ribosyl)imidazole-4-carboxamide + L-glutamate + H(+). Its pathway is amino-acid biosynthesis; L-histidine biosynthesis; L-histidine from 5-phospho-alpha-D-ribose 1-diphosphate: step 5/9. In terms of biological role, IGPS catalyzes the conversion of PRFAR and glutamine to IGP, AICAR and glutamate. The HisF subunit catalyzes the cyclization activity that produces IGP and AICAR from PRFAR using the ammonia provided by the HisH subunit. This is Putative imidazole glycerol phosphate synthase subunit hisF2 (hisF2) from Pseudomonas aeruginosa (strain ATCC 15692 / DSM 22644 / CIP 104116 / JCM 14847 / LMG 12228 / 1C / PRS 101 / PAO1).